The primary structure comprises 365 residues: Alanine racemase (365 aa).

Residue Lys-32 is the Proton acceptor; specific for D-alanine of the active site. Residue Lys-32 is modified to N6-(pyridoxal phosphate)lysine. Position 128 (Arg-128) interacts with substrate. The active-site Proton acceptor; specific for L-alanine is Tyr-257. A substrate-binding site is contributed by Met-305.

This sequence belongs to the alanine racemase family. Pyridoxal 5'-phosphate serves as cofactor.

The enzyme catalyses L-alanine = D-alanine. The protein operates within amino-acid biosynthesis; D-alanine biosynthesis; D-alanine from L-alanine: step 1/1. In terms of biological role, catalyzes the interconversion of L-alanine and D-alanine. May also act on other amino acids. In Francisella tularensis subsp. holarctica (strain LVS), this protein is Alanine racemase (alr).